Here is a 312-residue protein sequence, read N- to C-terminus: Acetyl-coenzyme A carboxylase carboxyl transferase subunit alpha (312 aa).

Residues 36-286 form the CoA carboxyltransferase C-terminal domain; it reads RLEKEVKSIY…KEYFLDALRT (251 aa).

The protein belongs to the AccA family. As to quaternary structure, acetyl-CoA carboxylase is a heterohexamer composed of biotin carboxyl carrier protein (AccB), biotin carboxylase (AccC) and two subunits each of ACCase subunit alpha (AccA) and ACCase subunit beta (AccD).

It is found in the cytoplasm. It carries out the reaction N(6)-carboxybiotinyl-L-lysyl-[protein] + acetyl-CoA = N(6)-biotinyl-L-lysyl-[protein] + malonyl-CoA. Its pathway is lipid metabolism; malonyl-CoA biosynthesis; malonyl-CoA from acetyl-CoA: step 1/1. Component of the acetyl coenzyme A carboxylase (ACC) complex. First, biotin carboxylase catalyzes the carboxylation of biotin on its carrier protein (BCCP) and then the CO(2) group is transferred by the carboxyltransferase to acetyl-CoA to form malonyl-CoA. The sequence is that of Acetyl-coenzyme A carboxylase carboxyl transferase subunit alpha from Helicobacter pylori (strain P12).